The following is a 205-amino-acid chain: Beta-crystallin B2 (205 aa).

Ala-2 carries the post-translational modification N-acetylalanine. An N-terminal arm region spans residues Ala-2–Asn-16. Beta/gamma crystallin 'Greek key' domains are found at residues Pro-17 to Ala-56 and Gly-57 to Lys-101. The interval Val-102–Glu-106 is connecting peptide. 2 Beta/gamma crystallin 'Greek key' domains span residues His-107 to Ser-148 and Gly-149 to Arg-191. Positions Met-193–Asn-205 are C-terminal arm.

The protein belongs to the beta/gamma-crystallin family. Homo/heterodimer, or complexes of higher-order. The structure of beta-crystallin oligomers seems to be stabilized through interactions between the N-terminal arms.

Crystallins are the dominant structural components of the vertebrate eye lens. The protein is Beta-crystallin B2 (CRYBB2) of Canis lupus familiaris (Dog).